We begin with the raw amino-acid sequence, 36 residues long: ACNFQSCWATCQAQHSIYFRRAFCDRSQCKCVFVRG.

Intrachain disulfides connect Cys-2–Cys-24, Cys-7–Cys-29, and Cys-11–Cys-31. Residue Gly-36 is modified to Glycine amide.

As to expression, expressed in salivary glands and hemocytes.

It localises to the secreted. Weak activity against Gram-positive bacteria B.megaterium, S.pyogenes and M.luteus, strong activity against yeasts C.albicans, C.neoformans and S.cerevisiae and filamentous fungi F.oxysporum, F.culmorum, N.crassa and N.hematococca. Less active against filamentous fungus T.viride. Inactive against Gram-positive bacteria A.viridans and S.aureus, filamentous fungi A.fumigatus and B.bassiana and yeast C.glabrata. The sequence is that of Termicin from Pseudacanthotermes spiniger.